We begin with the raw amino-acid sequence, 306 residues long: Solute carrier family 25 member 48 (306 aa).

Solcar repeat units lie at residues 3-86 (SFQL…TQRF), 101-200 (RSLS…LSEW), and 209-296 (PSPY…SLKA). 6 helical membrane passes run 9–29 (FVAG…LDTV), 61–81 (GMSF…GVFS), 107–127 (LLAS…VELI), 184–204 (IPGY…ITPE), 212–232 (YAAW…ATPM), and 272–290 (ITVN…FLGY).

It belongs to the mitochondrial carrier (TC 2.A.29) family.

Its subcellular location is the mitochondrion inner membrane. The polypeptide is Solute carrier family 25 member 48 (Slc25a48) (Mus musculus (Mouse)).